Here is a 449-residue protein sequence, read N- to C-terminus: Naphthalene 1,2-dioxygenase system, large oxygenase component (449 aa).

A Rieske domain is found at 39-137; it reads WLFLTHDSLI…LDKKCMGLKE (99 aa). [2Fe-2S] cluster is bound by residues C81, H83, C101, and H104. Positions 208, 213, and 362 each coordinate Fe cation.

This sequence belongs to the bacterial ring-hydroxylating dioxygenase alpha subunit family. In terms of assembly, the naphthalene dioxygenase (NDO) multicomponent enzyme system is composed of an electron transfer component and a dioxygenase component (iron sulfur protein (ISP)). The electron transfer component is composed of a ferredoxin reductase (NdoR) and a ferredoxin (NdoA), and the dioxygenase component is formed of a heterohexamer (trimer of heterodimers) of three large alpha subunits (NdoB) and three small beta subunits (NdoC). [2Fe-2S] cluster serves as cofactor. It depends on Fe(2+) as a cofactor.

It carries out the reaction naphthalene + NADH + O2 + H(+) = (1R,2S)-1,2-dihydronaphthalene-1,2-diol + NAD(+). It functions in the pathway aromatic compound metabolism; naphthalene degradation. Component of the naphthalene dioxygenase (NDO) multicomponent enzyme system which catalyzes the incorporation of both atoms of molecular oxygen into naphthalene to form cis-(1R,2S)-dihydroxy-1,2-dihydronaphthalene. The alpha subunit has a catalytic role in the holoenzyme. The sequence is that of Naphthalene 1,2-dioxygenase system, large oxygenase component from Pseudomonas aeruginosa.